The sequence spans 396 residues: L-aspartate--glyoxylate aminotransferase (396 aa).

K196 bears the N6-(pyridoxal phosphate)lysine mark.

This sequence belongs to the class-V pyridoxal-phosphate-dependent aminotransferase family. Pyridoxal 5'-phosphate serves as cofactor.

It carries out the reaction oxaloacetate + glycine = glyoxylate + L-aspartate. Functionally, catalyzes the transamination of glyoxylate into glycine using L-aspartate as the preferred amino group donor. Is essential for the growth of P.denitrificans in the presence of glycolate and glyoxylate since it functions in glyoxylate assimilation via the beta-hydroxyaspartate cycle (BHAC). Can catalyze the reverse reaction in vitro, and also use L-serine and L-glutamate as amino group donor, but with much less efficiency than L-aspartate. The polypeptide is L-aspartate--glyoxylate aminotransferase (Paracoccus denitrificans (strain Pd 1222)).